A 477-amino-acid polypeptide reads, in one-letter code: Fibrinogen beta chain (477 aa).

The interval 1–76 (EDLSLVGQPE…ASPRPQEAQK (76 aa)) is disordered. A Sulfotyrosine modification is found at Y13. The N-linked (GlcNAc...) asparagine glycan is linked to N27. A compositionally biased stretch (basic residues) spans 44-55 (RVRRPPLRHRRL). 3 cysteine pairs are disulfide-bonded: C220–C304, C230–C259, and C412–C425. Positions 221–476 (RVPVVSGMHC…QMAMKLRPKW (256 aa)) constitute a Fibrinogen C-terminal domain.

As to quaternary structure, heterohexamer; disulfide linked. Contains 2 sets of 3 non-identical chains (alpha, beta and gamma). The 2 heterotrimers are in head to head conformation with the N-termini in a small central domain. In terms of processing, conversion of fibrinogen to fibrin is triggered by thrombin, which cleaves fibrinopeptides A and B from alpha and beta chains, and thus exposes the N-terminal polymerization sites responsible for the formation of the soft clot. The soft clot is converted into the hard clot by factor XIIIA which catalyzes the epsilon-(gamma-glutamyl)lysine cross-linking between gamma chains (stronger) and between alpha chains (weaker) of different monomers.

Its subcellular location is the secreted. Functionally, fibrinogen has a double function: yielding monomers that polymerize into fibrin and acting as a cofactor in platelet aggregation. This chain is Fibrinogen beta chain, found in Petromyzon marinus (Sea lamprey).